The following is a 156-amino-acid chain: Large ribosomal subunit protein uL15 (156 aa).

Residues 29–48 (CGKGKTSGRGHKGQKARSGV) form a disordered region. Basic residues predominate over residues 34 to 43 (TSGRGHKGQK).

It belongs to the universal ribosomal protein uL15 family. As to quaternary structure, part of the 50S ribosomal subunit.

In terms of biological role, binds to the 23S rRNA. The chain is Large ribosomal subunit protein uL15 from Ehrlichia chaffeensis (strain ATCC CRL-10679 / Arkansas).